Here is a 351-residue protein sequence, read N- to C-terminus: Probable V-type proton ATPase subunit d (351 aa).

The protein belongs to the V-ATPase V0D/AC39 subunit family. V-ATPase is a heteromultimeric enzyme composed of a peripheral catalytic V1 complex (components A to H) attached to an integral membrane V0 proton pore complex (components: a, c, c', c'' and d).

In terms of biological role, subunit of the integral membrane V0 complex of vacuolar ATPase. Vacuolar ATPase is responsible for acidifying a variety of intracellular compartments in eukaryotic cells, thus providing most of the energy required for transport processes in the vacuolar system. The protein is Probable V-type proton ATPase subunit d of Oryza sativa subsp. japonica (Rice).